Consider the following 438-residue polypeptide: Aspartic proteinase nepenthesin-2 (438 aa).

A signal peptide spans 1–24 (MASPLYSVVLGLAIVSAIVAPTSS). A propeptide spans 25-79 (TSRGTLLHHGQKRPQPGLRVDLEQVDSGKNLTKYELIKRAIKRGERRMRSINAML) (activation peptide). A glycan (N-linked (GlcNAc...) asparagine) is linked at asparagine 54. The region spanning 96 to 431 (YLMNVAIGTP…DLQNLAVSFV (336 aa)) is the Peptidase A1 domain. Residue aspartate 114 is part of the active site. Disulfide bonds link cysteine 124/cysteine 127, cysteine 130/cysteine 204, cysteine 151/cysteine 169, cysteine 156/cysteine 164, cysteine 241/cysteine 435, and cysteine 354/cysteine 395. Aspartate 315 is a catalytic residue.

It belongs to the peptidase A1 family.

The protein resides in the secreted. The catalysed reaction is Similar to pepsin, but also cleaves on either side of Asp and at Lys-|-Arg.. With respect to regulation, inhibited by pepstatin and by diazoacetyl-D,L-norleucine methyl ester (DAN) in the presence of Cu(2+) ions. Its function is as follows. Extracellular proteinase found in the pitcher fluid of carnivorous plants. Digest prey for nitrogen uptake. This is Aspartic proteinase nepenthesin-2 (nep2) from Nepenthes gracilis (Slender pitcher plant).